A 121-amino-acid chain; its full sequence is Small ribosomal subunit protein uS11 (121 aa).

It belongs to the universal ribosomal protein uS11 family. As to quaternary structure, part of the 30S ribosomal subunit. Interacts with proteins S7 and S18. Binds to IF-3.

In terms of biological role, located on the platform of the 30S subunit, it bridges several disparate RNA helices of the 16S rRNA. Forms part of the Shine-Dalgarno cleft in the 70S ribosome. In Mycoplasmoides gallisepticum (strain R(low / passage 15 / clone 2)) (Mycoplasma gallisepticum), this protein is Small ribosomal subunit protein uS11.